The sequence spans 225 residues: Ribosome maturation factor RimM (225 aa).

Residues alanine 144 to tyrosine 225 form the PRC barrel domain.

Belongs to the RimM family. In terms of assembly, binds ribosomal protein uS19.

Its subcellular location is the cytoplasm. In terms of biological role, an accessory protein needed during the final step in the assembly of 30S ribosomal subunit, possibly for assembly of the head region. Essential for efficient processing of 16S rRNA. May be needed both before and after RbfA during the maturation of 16S rRNA. It has affinity for free ribosomal 30S subunits but not for 70S ribosomes. This Burkholderia lata (strain ATCC 17760 / DSM 23089 / LMG 22485 / NCIMB 9086 / R18194 / 383) protein is Ribosome maturation factor RimM.